A 687-amino-acid chain; its full sequence is Geranylgeranyl transferase type-2 subunit alpha 2 (687 aa).

5 PFTA repeats span residues 38-72, 83-117, 132-167, 168-203, and 214-248; these read YTKEAIQLSAKLLITNPEFYTAWNYPKLAFESRLD, IIDEELGVVQNALERNVKSYGAWYHRKWVLSKKGH, YQKQAHQKQDDEKQDDPSRNFHAWNYRRFVVELTKT, SEEDELQYTTDMISDISFTIYSAWHYRSVLVSSLVA, and TIRRELDYVHSAIFTLEEKQSGWFYYLWLLDQTVK. LRR repeat units follow at residues 523-545, 546-567, 568-591, 592-616, and 646-668; these read MNNIICLRLNNLTLSRIAAVEKL, LFVQMLDLSHNELHSAEGLEAM, QLLCCLNLSHNRIRSFSALDSLRH, LKQLRVLDVSHNHICGELPVDTTRY, and LMKLKQLDIRGNDLIFAGEEFSS.

This sequence belongs to the protein prenyltransferase subunit alpha family. As to quaternary structure, heterotrimer composed of the alpha subunit RGTA, the beta subunit RGTB and REP; within this trimer, RGTA and RGTB form the catalytic component, while REP mediates peptide substrate binding.

It carries out the reaction geranylgeranyl diphosphate + L-cysteinyl-[protein] = S-geranylgeranyl-L-cysteinyl-[protein] + diphosphate. The enzymatic reaction requires the aid of the Rab escort protein REP. Catalyzes the transfer of a geranylgeranyl moiety from geranylgeranyl diphosphate to both cysteines of Rab proteins with the C-terminal sequence -CCXX, CXXX, -XCCX and -XCXC, such as RABA1A, RABA2A, RABF2A and RABG2. Does not seem to be a functional Rab-GGT alpha subunit in vitro. The sequence is that of Geranylgeranyl transferase type-2 subunit alpha 2 from Arabidopsis thaliana (Mouse-ear cress).